Consider the following 328-residue polypeptide: C-type lectin domain family 4 member K (328 aa).

Topologically, residues 1-43 (MTVEKEAPDAHFTVDKQNISLWPREPPPKSGPSLVPGKTPTVR) are cytoplasmic. The helical; Signal-anchor for type II membrane protein transmembrane segment at 44–64 (AALICLTLVLVASVLLQAVLY) threads the bilayer. Residues 65–328 (PRFMGTISDV…CKRPYVPSEP (264 aa)) are Extracellular-facing. Asparagine 87, asparagine 113, and asparagine 180 each carry an N-linked (GlcNAc...) asparagine glycan. Residues 145-190 (EEVSTLNAQIPELKSDLEKASALNTKIRALQGSLENMSKLLKRQND) are a coiled coil. A C-type lectin domain is found at 202-320 (FKGNFYYFSL…CDKTFLFICK (119 aa)). Intrachain disulfides connect cysteine 223–cysteine 319 and cysteine 295–cysteine 311.

As to quaternary structure, homotrimer. As to expression, exclusively expressed by Langerhans cells. Expressed in astrocytoma and malignant ependymoma, but not in normal brain tissues.

The protein localises to the membrane. In terms of biological role, calcium-dependent lectin displaying mannose-binding specificity. Induces the formation of Birbeck granules (BGs); is a potent regulator of membrane superimposition and zippering. Binds to sulfated as well as mannosylated glycans, keratan sulfate (KS) and beta-glucans. Facilitates uptake of antigens and is involved in the routing and/or processing of antigen for presentation to T cells. Major receptor on primary Langerhans cells for Candida species, Saccharomyces species, and Malassezia furfur. Protects against human immunodeficiency virus-1 (HIV-1) infection. Binds to high-mannose structures present on the envelope glycoprotein which is followed by subsequent targeting of the virus to the Birbeck granules leading to its rapid degradation. This is C-type lectin domain family 4 member K (CD207) from Homo sapiens (Human).